A 323-amino-acid polypeptide reads, in one-letter code: Ribonuclease Z (323 aa).

Zn(2+)-binding residues include His-62, His-64, Asp-66, His-67, His-140, Asp-211, and His-270. The active-site Proton acceptor is Asp-66.

Belongs to the RNase Z family. In terms of assembly, homodimer. Zn(2+) serves as cofactor.

It catalyses the reaction Endonucleolytic cleavage of RNA, removing extra 3' nucleotides from tRNA precursor, generating 3' termini of tRNAs. A 3'-hydroxy group is left at the tRNA terminus and a 5'-phosphoryl group is left at the trailer molecule.. In terms of biological role, zinc phosphodiesterase, which displays some tRNA 3'-processing endonuclease activity. Probably involved in tRNA maturation, by removing a 3'-trailer from precursor tRNA. This is Ribonuclease Z from Marinobacter nauticus (strain ATCC 700491 / DSM 11845 / VT8) (Marinobacter aquaeolei).